We begin with the raw amino-acid sequence, 545 residues long: Protein FAR1-RELATED SEQUENCE 9 (545 aa).

The FAR1 domain occupies 22–65 (LNYLKRRQLENPGFLYAIEDDCGNVFWADPTCRLNYTYFGDTLV). An MULE domain is found at 66–150 (FDTTYRRGKR…RVFSQTRLRF (85 aa)). The SWIM-type zinc-finger motif lies at 345–381 (HTVSFDSLEVKANCSCQMFEYSGIICRHILAVFSAKN). The tract at residues 460–495 (SNRTPGTRLPNGEAYPSEEARETANATNHPGGEKER) is disordered. Residues 492–545 (EKERTILELTAELERTGQRCEVYRANLLSILRDMEEQKFQLSLKVQNARLSLKE) adopt a coiled-coil conformation.

It belongs to the FHY3/FAR1 family. In terms of tissue distribution, expressed in hypocotyls, rosette and cauline leaves, inflorescences stems, flowers and siliques.

It localises to the nucleus. Functionally, putative transcription activator involved in regulating light control of development. May act as a negative regulator specific to phyB signaling. This chain is Protein FAR1-RELATED SEQUENCE 9 (FRS9), found in Arabidopsis thaliana (Mouse-ear cress).